The primary structure comprises 250 residues: Phosphoribosylaminoimidazole-succinocarboxamide synthase (250 aa).

It belongs to the SAICAR synthetase family.

The enzyme catalyses 5-amino-1-(5-phospho-D-ribosyl)imidazole-4-carboxylate + L-aspartate + ATP = (2S)-2-[5-amino-1-(5-phospho-beta-D-ribosyl)imidazole-4-carboxamido]succinate + ADP + phosphate + 2 H(+). Its pathway is purine metabolism; IMP biosynthesis via de novo pathway; 5-amino-1-(5-phospho-D-ribosyl)imidazole-4-carboxamide from 5-amino-1-(5-phospho-D-ribosyl)imidazole-4-carboxylate: step 1/2. This Synechococcus sp. (strain WH7803) protein is Phosphoribosylaminoimidazole-succinocarboxamide synthase.